Reading from the N-terminus, the 490-residue chain is O-acetyltransferase PaAT-2 (490 aa).

Catalysis depends on histidine 165, which acts as the Proton acceptor.

This sequence belongs to the plant acyltransferase family.

It functions in the pathway mycotoxin biosynthesis. Its function is as follows. O-acetyltransferase; part of the 2 gene clusters that mediate the biosynthesis of fusicoccins, diterpene glucosides that display phytohormone-like activity and function as potent activators of plasma membrane H(+)-ATPases in plants by modifying 14-3-3 proteins and cause the plant disease constriction canker. The first step in the pathway is performed by the fusicoccadiene synthase PaFS that possesses both prenyl transferase and terpene cyclase activity, converting isopentenyl diphosphate and dimethylallyl diphosphate into geranylgeranyl diphosphate (GGDP) and successively converting GGDP into fusicocca-2,10(14)-diene, a precursor for fusicoccin H. The second step is the oxidation at the C-8 position by the cytochrome P450 monooxygenase PaP450-2 to yield fusicocca-2,10(14)-diene-8-beta-ol. The cytochrome P450 monooxygenase PaP450-1 then catalyzes the hydroxylation at the C-16 position to produce fusicocca-2,10(14)-diene-8-beta,16-diol. The dioxygenase fc-dox then catalyzes the 16-oxydation of fusicocca-2,10(14)-diene-8-beta,16-diol to yield an aldehyde (8-beta-hydroxyfusicocca-1,10(14)-dien-16-al). The short-chain dehydrogenase/reductase fc-sdr catalyzes the reduction of the aldehyde to yield fusicocca-1,10(14)-diene-8-beta,16-diol. The next step is the hydroxylation at C-9 performed by the cytochrome P450 monooxygenase PaP450-3 that leads to fusicoccin H aglycon which is glycosylated to fusicoccin H by the O-glycosyltransferase PaGT. Hydroxylation at C-12 by the cytochrome P450 monooxygenase PaP450-4 leads then to the production of fusicoccin Q and is followed by methylation by the O-methyltransferase PaMT to yield fusicoccin P. Fusicoccin P is further converted to fusicoccin J via prenylation by the O-glucose prenyltransferase PaPT. Cytochrome P450 monooxygenase PaP450-5 then performs hydroxylation at C-19 to yield dideacetyl-fusicoccin A which is acetylated to 3'-O-deacetyl-fusicoccin A by the O-acetyltransferase PaAT-2. Finally, a another acetylation by the O-acetyltransferase PaAT-1 yields fusicoccin A. This Phomopsis amygdali (Fusicoccum amygdali) protein is O-acetyltransferase PaAT-2.